The following is a 119-amino-acid chain: Large ribosomal subunit protein bL17 (119 aa).

This sequence belongs to the bacterial ribosomal protein bL17 family. Part of the 50S ribosomal subunit. Contacts protein L32.

The sequence is that of Large ribosomal subunit protein bL17 from Psychrobacter arcticus (strain DSM 17307 / VKM B-2377 / 273-4).